The chain runs to 80 residues: Translation initiation factor IF-1, chloroplastic (80 aa).

The S1-like domain maps to 1-72; the sequence is MKEHDLINME…TKGRILYRIR (72 aa).

The protein belongs to the IF-1 family. As to quaternary structure, component of the 30S ribosomal translation pre-initiation complex which assembles on the 30S ribosome in the order IF-2 and IF-3, IF-1 and N-formylmethionyl-tRNA(fMet); mRNA recruitment can occur at any time during PIC assembly.

The protein resides in the plastid. It is found in the chloroplast. Functionally, one of the essential components for the initiation of protein synthesis. Stabilizes the binding of IF-2 and IF-3 on the 30S subunit to which N-formylmethionyl-tRNA(fMet) subsequently binds. Helps modulate mRNA selection, yielding the 30S pre-initiation complex (PIC). Upon addition of the 50S ribosomal subunit IF-1, IF-2 and IF-3 are released leaving the mature 70S translation initiation complex. The polypeptide is Translation initiation factor IF-1, chloroplastic (Psilotum nudum (Whisk fern)).